Here is a 219-residue protein sequence, read N- to C-terminus: Protein DMP5 (219 aa).

The tract at residues 1-24 is disordered; sequence MSALRLRNANTPAPELDELSDQTP. A run of 4 helical transmembrane segments spans residues 51-71, 82-102, 142-162, and 182-202; these read LSNLLPTGTLLAFQLLTPVFT, FLTAVLLFLLAASCFVSSFTD, MRFVDWIHATLSVLVFGAVAL, and VLDIVPVGVGVMCSLLFMVFP.

This sequence belongs to the plant DMP1 protein family.

It is found in the endoplasmic reticulum membrane. Its function is as follows. Involved in membrane remodeling. This is Protein DMP5 from Arabidopsis thaliana (Mouse-ear cress).